A 354-amino-acid chain; its full sequence is Non-structural protein NS2 (354 aa).

2 disordered regions span residues 163–196 (NERESAPRLQVQSVASREESRWMDDDEAKVDNEA) and 229–269 (DERD…THIT). Composition is skewed to basic and acidic residues over residues 178 to 196 (SREESRWMDDDEAKVDNEA) and 237 to 249 (DERGDEEQVKTLS). Over residues 250 to 260 (DDDDQGEDASD) the composition is skewed to acidic residues.

In terms of biological role, single-stranded RNA-binding protein. The protein is Non-structural protein NS2 (Segment-8) of Bluetongue virus 17 (isolate USA) (BTV 17).